The chain runs to 84 residues: Small ribosomal subunit protein uS17c (84 aa).

The protein belongs to the universal ribosomal protein uS17 family. As to quaternary structure, part of the 30S ribosomal subunit.

It localises to the plastid. The protein localises to the chloroplast. Its function is as follows. One of the primary rRNA binding proteins, it binds specifically to the 5'-end of 16S ribosomal RNA. This chain is Small ribosomal subunit protein uS17c (rps17), found in Thalassiosira pseudonana (Marine diatom).